A 281-amino-acid chain; its full sequence is Putative pyruvate, phosphate dikinase regulatory protein (281 aa).

An ADP-binding site is contributed by 153–160 (GISRTSKT).

Belongs to the pyruvate, phosphate/water dikinase regulatory protein family. PDRP subfamily.

It catalyses the reaction N(tele)-phospho-L-histidyl/L-threonyl-[pyruvate, phosphate dikinase] + ADP = N(tele)-phospho-L-histidyl/O-phospho-L-threonyl-[pyruvate, phosphate dikinase] + AMP + H(+). It carries out the reaction N(tele)-phospho-L-histidyl/O-phospho-L-threonyl-[pyruvate, phosphate dikinase] + phosphate + H(+) = N(tele)-phospho-L-histidyl/L-threonyl-[pyruvate, phosphate dikinase] + diphosphate. In terms of biological role, bifunctional serine/threonine kinase and phosphorylase involved in the regulation of the pyruvate, phosphate dikinase (PPDK) by catalyzing its phosphorylation/dephosphorylation. This chain is Putative pyruvate, phosphate dikinase regulatory protein, found in Bdellovibrio bacteriovorus (strain ATCC 15356 / DSM 50701 / NCIMB 9529 / HD100).